The primary structure comprises 174 residues: RNA pyrophosphohydrolase (174 aa).

Residues 6–149 (GFRANVGIII…KRDVYRKVMK (144 aa)) enclose the Nudix hydrolase domain. The short motif at 38–59 (GGVDEGESAEQAMYRELYEEVG) is the Nudix box element.

It belongs to the Nudix hydrolase family. RppH subfamily. Requires a divalent metal cation as cofactor.

Functionally, accelerates the degradation of transcripts by removing pyrophosphate from the 5'-end of triphosphorylated RNA, leading to a more labile monophosphorylated state that can stimulate subsequent ribonuclease cleavage. The polypeptide is RNA pyrophosphohydrolase (Shewanella loihica (strain ATCC BAA-1088 / PV-4)).